Consider the following 57-residue polypeptide: MAVPKKKTSKTKRDQRKANWKHQAALEAQKALSLGKSILTGRSTFVYPQDEAEDEDE.

The segment covering 1–20 (MAVPKKKTSKTKRDQRKANW) has biased composition (basic residues). The segment at 1-21 (MAVPKKKTSKTKRDQRKANWK) is disordered.

Belongs to the bacterial ribosomal protein bL32 family.

The polypeptide is Large ribosomal subunit protein bL32 (Rippkaea orientalis (strain PCC 8801 / RF-1) (Cyanothece sp. (strain PCC 8801))).